A 346-amino-acid chain; its full sequence is S-adenosylmethionine:tRNA ribosyltransferase-isomerase (346 aa).

The protein belongs to the QueA family. Monomer.

It is found in the cytoplasm. The catalysed reaction is 7-aminomethyl-7-carbaguanosine(34) in tRNA + S-adenosyl-L-methionine = epoxyqueuosine(34) in tRNA + adenine + L-methionine + 2 H(+). It participates in tRNA modification; tRNA-queuosine biosynthesis. Transfers and isomerizes the ribose moiety from AdoMet to the 7-aminomethyl group of 7-deazaguanine (preQ1-tRNA) to give epoxyqueuosine (oQ-tRNA). The sequence is that of S-adenosylmethionine:tRNA ribosyltransferase-isomerase from Chloroherpeton thalassium (strain ATCC 35110 / GB-78).